Consider the following 234-residue polypeptide: Thymidylate kinase (234 aa).

ATP is bound at residue 20 to 27 (GIDASGKT).

This sequence belongs to the thymidylate kinase family.

The enzyme catalyses dTMP + ATP = dTDP + ADP. Phosphorylation of dTMP to form dTDP in both de novo and salvage pathways of dTTP synthesis. The sequence is that of Thymidylate kinase from Mycoplasmopsis pulmonis (strain UAB CTIP) (Mycoplasma pulmonis).